The chain runs to 242 residues: Uridylate kinase (242 aa).

15-18 lines the ATP pocket; the sequence is KLSG. G57 contacts UMP. G58 and R62 together coordinate ATP. Residues D78 and 139–146 contribute to the UMP site; that span reads TGNPFFTT. Residues T166, Y172, and D175 each contribute to the ATP site.

This sequence belongs to the UMP kinase family. In terms of assembly, homohexamer.

The protein resides in the cytoplasm. It catalyses the reaction UMP + ATP = UDP + ADP. The protein operates within pyrimidine metabolism; CTP biosynthesis via de novo pathway; UDP from UMP (UMPK route): step 1/1. Its activity is regulated as follows. Inhibited by UTP. Functionally, catalyzes the reversible phosphorylation of UMP to UDP. The sequence is that of Uridylate kinase from Acinetobacter baylyi (strain ATCC 33305 / BD413 / ADP1).